A 420-amino-acid polypeptide reads, in one-letter code: Glutamate-1-semialdehyde 2,1-aminomutase (420 aa).

Lysine 259 carries the post-translational modification N6-(pyridoxal phosphate)lysine.

This sequence belongs to the class-III pyridoxal-phosphate-dependent aminotransferase family. HemL subfamily. As to quaternary structure, homodimer. Requires pyridoxal 5'-phosphate as cofactor.

It localises to the cytoplasm. It carries out the reaction (S)-4-amino-5-oxopentanoate = 5-aminolevulinate. The protein operates within porphyrin-containing compound metabolism; protoporphyrin-IX biosynthesis; 5-aminolevulinate from L-glutamyl-tRNA(Glu): step 2/2. The sequence is that of Glutamate-1-semialdehyde 2,1-aminomutase from Nautilia profundicola (strain ATCC BAA-1463 / DSM 18972 / AmH).